Reading from the N-terminus, the 642-residue chain is Threonine--tRNA ligase (642 aa).

The region spanning 1–61 (MPVITLPDGS…ENDATLSIIT (61 aa)) is the TGS domain. The interval 243–534 (DHRKIGKQLD…LTEEFAGFFP (292 aa)) is catalytic. Residues cysteine 334, histidine 385, and histidine 511 each contribute to the Zn(2+) site.

Belongs to the class-II aminoacyl-tRNA synthetase family. As to quaternary structure, homodimer. It depends on Zn(2+) as a cofactor.

The protein localises to the cytoplasm. The enzyme catalyses tRNA(Thr) + L-threonine + ATP = L-threonyl-tRNA(Thr) + AMP + diphosphate + H(+). Its function is as follows. Catalyzes the attachment of threonine to tRNA(Thr) in a two-step reaction: L-threonine is first activated by ATP to form Thr-AMP and then transferred to the acceptor end of tRNA(Thr). Also edits incorrectly charged L-seryl-tRNA(Thr). In Salmonella heidelberg (strain SL476), this protein is Threonine--tRNA ligase.